The chain runs to 78 residues: uncharacterized protein (78 aa).

A helical membrane pass occupies residues alanine 44–valine 66.

It belongs to the TatC family.

It is found in the plastid. It localises to the chloroplast membrane. This is an uncharacterized protein from Dictyota dichotoma.